A 136-amino-acid polypeptide reads, in one-letter code: Histone H3.3C (136 aa).

Residues 1 to 44 (MARTKQTARKSTGGKAPRKQLVTKAARKSAPSTGGMKKPHRYRP) form a disordered region. Residue R3 is modified to Asymmetric dimethylarginine; by PRMT6; alternate. R3 is modified (citrulline; alternate). A Phosphothreonine; by HASPIN modification is found at T4. Allysine; alternate is present on K5. N6,N6,N6-trimethyllysine; alternate is present on K5. The residue at position 5 (K5) is an N6,N6-dimethyllysine; alternate. An N6-(2-hydroxyisobutyryl)lysine; alternate modification is found at K5. An N6-(beta-hydroxybutyryl)lysine; alternate modification is found at K5. K5 bears the N6-acetyllysine; alternate mark. An N6-methyllysine; alternate modification is found at K5. Position 6 is a 5-glutamyl dopamine; alternate (Q6). Q6 carries the post-translational modification 5-glutamyl serotonin; alternate. T7 carries the phosphothreonine; by PKC modification. R9 carries the post-translational modification Symmetric dimethylarginine. K10 carries the post-translational modification N6,N6,N6-trimethyllysine; alternate. Residue K10 is modified to N6,N6-dimethyllysine; alternate. K10 is modified (N6-(2-hydroxyisobutyryl)lysine; alternate). N6-(beta-hydroxybutyryl)lysine; alternate is present on K10. K10 is modified (N6-acetyllysine; alternate). K10 is modified (N6-methyllysine; alternate). At K10 the chain carries N6-lactoyllysine; alternate. S11 carries the ADP-ribosylserine; alternate modification. S11 carries the post-translational modification Phosphoserine; alternate; by AURKB, AURKC, RPS6KA3, RPS6KA4 and RPS6KA5. T12 carries the post-translational modification Phosphothreonine; by PKC. K15 is subject to N6-(2-hydroxyisobutyryl)lysine; alternate. An N6-(beta-hydroxybutyryl)lysine; alternate modification is found at K15. N6-acetyllysine; alternate is present on K15. An N6-lactoyllysine; alternate modification is found at K15. Residue K15 is modified to N6-glutaryllysine; alternate. Position 15 is an N6-succinyllysine; alternate (K15). Asymmetric dimethylarginine is present on R18. N6-(2-hydroxyisobutyryl)lysine; alternate is present on residues K19 and K24. N6-(beta-hydroxybutyryl)lysine; alternate is present on residues K19 and K24. N6-acetyllysine; alternate is present on residues K19 and K24. An N6-methyllysine; alternate mark is found at K19 and K24. Residues K19 and K24 each carry the N6-lactoyllysine; alternate modification. 2 positions are modified to N6-glutaryllysine; alternate: K19 and K24. 2 positions are modified to N6-butyryllysine; alternate: K19 and K24. R27 carries the post-translational modification Citrulline. K28 is subject to N6,N6,N6-trimethyllysine; alternate. Residue K28 is modified to N6,N6-dimethyllysine; alternate. K28 carries the N6-(2-hydroxyisobutyryl)lysine; alternate modification. K28 carries the N6-acetyllysine; alternate modification. K28 is subject to N6-methyllysine; alternate. K28 carries the post-translational modification N6-lactoyllysine; alternate. K28 is modified (N6-glutaryllysine; alternate). S29 carries the ADP-ribosylserine; alternate modification. A Phosphoserine; alternate; by AURKB, AURKC and RPS6KA5 modification is found at S29. S32 carries the post-translational modification Phosphoserine. K37 is subject to N6,N6,N6-trimethyllysine; alternate. An N6,N6-dimethyllysine; alternate modification is found at K37. The residue at position 37 (K37) is an N6-(2-hydroxyisobutyryl)lysine; alternate. An N6-acetyllysine; alternate modification is found at K37. The residue at position 37 (K37) is an N6-methyllysine; alternate. N6-methyllysine is present on K38. Residue Y42 is modified to Phosphotyrosine. The residue at position 57 (K57) is an N6,N6,N6-trimethyllysine; alternate. At K57 the chain carries N6-(2-hydroxyisobutyryl)lysine; alternate. K57 is subject to N6-(beta-hydroxybutyryl)lysine; alternate. Residue K57 is modified to N6-acetyllysine; alternate. The residue at position 57 (K57) is an N6-methyllysine; alternate. K57 is modified (N6-lactoyllysine; alternate). An N6-glutaryllysine; alternate modification is found at K57. Residue K57 is modified to N6-succinyllysine; alternate. S58 is modified (phosphoserine). N6-(2-hydroxyisobutyryl)lysine; alternate occurs at positions 65 and 80. N6-methyllysine; alternate occurs at positions 65 and 80. Residue K80 is modified to N6,N6,N6-trimethyllysine; alternate. N6,N6-dimethyllysine; alternate is present on K80. An N6-acetyllysine; alternate modification is found at K80. The residue at position 80 (K80) is an N6-lactoyllysine; alternate. K80 carries the N6-glutaryllysine; alternate modification. Residue K80 is modified to N6-succinyllysine; alternate. At T81 the chain carries Phosphothreonine. At S87 the chain carries Phosphoserine. Residue T108 is modified to Phosphothreonine. At K116 the chain carries N6-acetyllysine; alternate. K116 is subject to N6-glutaryllysine; alternate.

The protein belongs to the histone H3 family. As to quaternary structure, the nucleosome is a histone octamer containing two molecules each of H2A, H2B, H3 and H4 assembled in one H3-H4 heterotetramer and two H2A-H2B heterodimers. The octamer wraps approximately 147 bp of DNA. In terms of processing, acetylation is generally linked to gene activation. Acetylation on Lys-19 (H3K18ac) favors methylation at Arg-18 (H3R17me). Post-translationally, citrullination at Arg-18 by PADI4 impairs methylation and represses transcription. Asymmetric dimethylation at Arg-18 (H3R17me2a) by CARM1 is linked to gene activation. Asymmetric dimethylation at Arg-3 (H3R2me2a) by PRMT6 is linked to gene repression and is mutually exclusive with H3 Lys-5 methylation (H3K4me2 and H3K4me3). H3R2me2a is present at the 3' of genes regardless of their transcription state and is enriched on inactive promoters, while it is absent on active promoters. In terms of processing, methylation at Lys-5 (H3K4me) and Lys-80 (H3K79me) are linked to gene activation. Methylation at Lys-5 (H3K4me) facilitates subsequent acetylation of H3 and H4. Methylation at Lys-80 (H3K79me) is associated with DNA double-strand break (DSB) responses and is a specific target for TP53BP1. Methylation at Lys-10 (H3K9me) and Lys-28 (H3K27me) are linked to gene repression. Methylation at Lys-10 (H3K9me) is a specific target for HP1 proteins (CBX1, CBX3 and CBX5) and prevents subsequent phosphorylation at Ser-11 (H3S10ph) and acetylation of H3 and H4. Methylation at Lys-5 (H3K4me) and Lys-80 (H3K79me) require preliminary monoubiquitination of H2B at 'Lys-120'. Methylation at Lys-10 (H3K9me) and Lys-28 (H3K27me) are enriched in inactive X chromosome chromatin. Monomethylation at Lys-57 (H3K56me1) by EHMT2/G9A in G1 phase promotes interaction with PCNA and is required for DNA replication. Post-translationally, phosphorylated at Thr-4 (H3T3ph) by HASPIN during prophase and dephosphorylated during anaphase. Phosphorylation at Ser-11 (H3S10ph) by AURKB is crucial for chromosome condensation and cell-cycle progression during mitosis and meiosis. In addition phosphorylation at Ser-11 (H3S10ph) by RPS6KA4 and RPS6KA5 is important during interphase because it enables the transcription of genes following external stimulation, like mitogens, stress, growth factors or UV irradiation and result in the activation of genes, such as c-fos and c-jun. Phosphorylation at Ser-11 (H3S10ph), which is linked to gene activation, prevents methylation at Lys-10 (H3K9me) but facilitates acetylation of H3 and H4. Phosphorylation at Ser-11 (H3S10ph) by AURKB mediates the dissociation of HP1 proteins (CBX1, CBX3 and CBX5) from heterochromatin. Phosphorylation at Ser-11 (H3S10ph) is also an essential regulatory mechanism for neoplastic cell transformation. Phosphorylated at Ser-29 (H3S28ph) by MAP3K20 isoform 1, RPS6KA5 or AURKB during mitosis or upon ultraviolet B irradiation. Phosphorylation at Thr-7 (H3T6ph) by PRKCB is a specific tag for epigenetic transcriptional activation that prevents demethylation of Lys-5 (H3K4me) by LSD1/KDM1A. At centromeres, specifically phosphorylated at Thr-12 (H3T11ph) from prophase to early anaphase, by DAPK3 and PKN1. Phosphorylation at Thr-12 (H3T11ph) by PKN1 or isoform M2 of PKM (PKM2) is a specific tag for epigenetic transcriptional activation that promotes demethylation of Lys-10 (H3K9me) by KDM4C/JMJD2C. Phosphorylation at Tyr-42 (H3Y41ph) by JAK2 promotes exclusion of CBX5 (HP1 alpha) from chromatin. Lysine deamination at Lys-5 (H3K4all) to form allysine is mediated by LOXL2. Allysine formation by LOXL2 only takes place on H3K4me3 and results in gene repression. In terms of processing, butyrylation of histones marks active promoters and competes with histone acetylation. It is present during late spermatogenesis. Post-translationally, succinylation at Lys-80 (H3K79succ) by KAT2A takes place with a maximum frequency around the transcription start sites of genes. It gives a specific tag for epigenetic transcription activation. Serine ADP-ribosylation constitutes the primary form of ADP-ribosylation of proteins in response to DNA damage. Serine ADP-ribosylation at Ser-11 (H3S10ADPr) is mutually exclusive with phosphorylation at Ser-11 (H3S10ph) and impairs acetylation at Lys-10 (H3K9ac).

The protein localises to the nucleus. Its subcellular location is the chromosome. Its function is as follows. Core component of nucleosome. Nucleosomes wrap and compact DNA into chromatin, limiting DNA accessibility to the cellular machineries which require DNA as a template. Histones thereby play a central role in transcription regulation, DNA repair, DNA replication and chromosomal stability. DNA accessibility is regulated via a complex set of post-translational modifications of histones, also called histone code, and nucleosome remodeling. The polypeptide is Histone H3.3C (Bos taurus (Bovine)).